Here is a 297-residue protein sequence, read N- to C-terminus: Mitochondrial nicotinamide adenine dinucleotide transporter SLC25A51 (297 aa).

Positions 1-11 (MMDSEAHEKRP) are enriched in basic and acidic residues. The disordered stretch occupies residues 1 to 20 (MMDSEAHEKRPPILTSSKQD). Solcar repeat units lie at residues 28–108 (VGEM…LSCL), 116–200 (PEFA…IKEH), and 213–296 (NDFI…LLKV). 6 consecutive transmembrane segments (helical) span residues 36-56 (CGCCAAFNNVAITFPIQKVLF), 85-105 (LPPLMQKTTTLALMFGLYEDL), 116-135 (PEFATSGVAAVLAGTTEAIF), 179-199 (ILFRNGLSNVLFFGLRGPIKE), 215-235 (FICGGLLGAMLGFLFFPINVV), and 268-289 (LFRGAHLNYHRSLISWGIINAT).

Belongs to the mitochondrial carrier (TC 2.A.29) family.

Its subcellular location is the mitochondrion inner membrane. It carries out the reaction NAD(+)(in) = NAD(+)(out). Functionally, mitochondrial membrane carrier protein that mediates the import of NAD(+) into mitochondria. Mitochondrial NAD(+) is required for glycolysis and mitochondrial respiration. Compared to SLC25A52, SLC25A51-mediated transport is essential for the import of NAD(+) in mitochondria. The transport mechanism, uniport or antiport, its electrogenicity and substrate selectivity, remain to be elucidated. The polypeptide is Mitochondrial nicotinamide adenine dinucleotide transporter SLC25A51 (Homo sapiens (Human)).